Consider the following 421-residue polypeptide: Ankyrin repeat and SOCS box protein 6 (421 aa).

ANK repeat units follow at residues 67–97, 102–131, 136–166, 170–205, 226–255, and 260–289; these read EGVS…NLNF, TYYT…DVNR, HESS…DVNA, HGKT…DVKA, GGDK…DPSE, and ESLT…AYNC. The SOCS box domain occupies 360 to 415; the sequence is ALHFSLRQLESYPPPLKHLCRVAIRLYLQPWPVDVKVKALPLPDRLKWYLLSEHSG.

The protein belongs to the ankyrin SOCS box (ASB) family. In terms of assembly, binds APS. Identified in a complex with ELOB and ELOC. Interacts with CUL5 and RNF7. Interacts with SQSTM1. In terms of processing, ubiquitinated by RNF41; leading to proteasomal degradation.

It is found in the cytoplasm. Its pathway is protein modification; protein ubiquitination. Its function is as follows. Probable substrate-recognition component of a SCF-like ECS (Elongin-Cullin-SOCS-box protein) E3 ubiquitin-protein ligase complex which mediates the ubiquitination and subsequent proteasomal degradation of target proteins. May play a role in the regulation of cell proliferation and autophagy by promoting the ubiquitination and degradation of SQSTM1. This Homo sapiens (Human) protein is Ankyrin repeat and SOCS box protein 6 (ASB6).